A 572-amino-acid polypeptide reads, in one-letter code: Arginine--tRNA ligase (572 aa).

Residues 122 to 132 (PNLAKEMHVGH) carry the 'HIGH' region motif.

This sequence belongs to the class-I aminoacyl-tRNA synthetase family. In terms of assembly, monomer.

Its subcellular location is the cytoplasm. It catalyses the reaction tRNA(Arg) + L-arginine + ATP = L-arginyl-tRNA(Arg) + AMP + diphosphate. This Neisseria gonorrhoeae (strain ATCC 700825 / FA 1090) protein is Arginine--tRNA ligase.